The primary structure comprises 806 residues: Protein bimA (806 aa).

TPR repeat units lie at residues Leu76 to Arg109 and Ala127 to Met160. Disordered stretches follow at residues Val202–Gly348, Thr353–Gly372, and Arg401–Lys460. The span at Ala224 to Ser237 shows a compositional bias: polar residues. Residues Gly246–Gly257 are compositionally biased toward low complexity. Residues Leu260–Glu399 form a bimA domain region. Over residues Thr328–Gly348 the composition is skewed to basic and acidic residues. The segment covering Thr408–Val421 has biased composition (polar residues). The segment covering His432–Arg445 has biased composition (basic and acidic residues). The segment covering Gly446–Ser459 has biased composition (low complexity). 6 TPR repeats span residues Pro513–Arg546, Pro581–Phe614, Tyr616–His648, Tyr649–Asn682, Val684–Ser716, and Ala751–Ala784.

It belongs to the APC3/CDC27 family.

It localises to the nucleus. Functionally, required for the completion of mitosis in Aspergillus nidulans. The protein is Protein bimA (bimA) of Emericella nidulans (strain FGSC A4 / ATCC 38163 / CBS 112.46 / NRRL 194 / M139) (Aspergillus nidulans).